Reading from the N-terminus, the 493-residue chain is ATP-dependent rRNA helicase RRP3 (493 aa).

Basic and acidic residues-rich tracts occupy residues A26–E42 and E51–K62. The disordered stretch occupies residues A26–E68. The short motif at E73–A101 is the Q motif element. In terms of domain architecture, Helicase ATP-binding spans I104–C276. Position 117-124 (A117–T124) interacts with ATP. A DEAD box motif is present at residues D223–D226. Residues L307–V453 form the Helicase C-terminal domain. The tract at residues R467–K493 is disordered. Residues M483–K493 show a composition bias toward basic and acidic residues.

Belongs to the DEAD box helicase family. DDX47/RRP3 subfamily. In terms of assembly, interacts with the SSU processome.

The protein localises to the nucleus. It catalyses the reaction ATP + H2O = ADP + phosphate + H(+). ATP-dependent rRNA helicase required for pre-ribosomal RNA processing. Involved in the maturation of the 35S-pre-rRNA and to its cleavage to mature 18S rRNA. In Candida glabrata (strain ATCC 2001 / BCRC 20586 / JCM 3761 / NBRC 0622 / NRRL Y-65 / CBS 138) (Yeast), this protein is ATP-dependent rRNA helicase RRP3.